A 279-amino-acid polypeptide reads, in one-letter code: Expansin-A22 (279 aa).

Residues 1 to 27 (MKLLEKMIYVEFLMIIMVIWVVPMSYG) form the signal peptide. The Expansin-like EG45 domain occupies 76-186 (QGACGYGNLF…RRIPCSKTGG (111 aa)). One can recognise an Expansin-like CBD domain in the interval 196 to 275 (YFLMVLIYNV…NWGFGQTFDG (80 aa)).

The protein belongs to the expansin family. Expansin A subfamily.

It is found in the secreted. The protein resides in the cell wall. Its subcellular location is the membrane. Functionally, causes loosening and extension of plant cell walls by disrupting non-covalent bonding between cellulose microfibrils and matrix glucans. No enzymatic activity has been found. The sequence is that of Expansin-A22 (EXPA22) from Arabidopsis thaliana (Mouse-ear cress).